The sequence spans 123 residues: Holo-[acyl-carrier-protein] synthase (123 aa).

Mg(2+) is bound by residues D8 and E60.

It belongs to the P-Pant transferase superfamily. AcpS family. It depends on Mg(2+) as a cofactor.

Its subcellular location is the cytoplasm. It catalyses the reaction apo-[ACP] + CoA = holo-[ACP] + adenosine 3',5'-bisphosphate + H(+). Its function is as follows. Transfers the 4'-phosphopantetheine moiety from coenzyme A to a Ser of acyl-carrier-protein. This Ehrlichia chaffeensis (strain ATCC CRL-10679 / Arkansas) protein is Holo-[acyl-carrier-protein] synthase.